A 301-amino-acid polypeptide reads, in one-letter code: Protein translocase subunit SecF (301 aa).

6 helical membrane-spanning segments follow: residues 17–37 (YIAL…IFQI), 137–157 (DALF…AIRF), 163–183 (IGAT…FYIL), 190–210 (IFIS…VVVF), 239–261 (LSRT…FFGG), and 272–292 (ILGI…VVLL).

Belongs to the SecD/SecF family. SecF subfamily. In terms of assembly, forms a complex with SecD. Part of the essential Sec protein translocation apparatus which comprises SecA, SecYEG and auxiliary proteins SecDF. Other proteins may also be involved.

It localises to the cell inner membrane. Functionally, part of the Sec protein translocase complex. Interacts with the SecYEG preprotein conducting channel. SecDF uses the proton motive force (PMF) to complete protein translocation after the ATP-dependent function of SecA. This Thermodesulfovibrio yellowstonii (strain ATCC 51303 / DSM 11347 / YP87) protein is Protein translocase subunit SecF.